The following is a 2297-amino-acid chain: Serine/threonine-protein kinase WNK2 (2297 aa).

Over residues 1–10 (MDGDGGRRDV) the composition is skewed to basic and acidic residues. 2 disordered regions span residues 1–75 (MDGD…QRRV) and 89–183 (ARGR…EDDL). R19 and R30 each carry omega-N-methylarginine. Residue S45 is modified to Phosphoserine. Low complexity predominate over residues 92–120 (RPAAPAPAALVAQPGAPGAPADAGPEPVG). Basic and acidic residues predominate over residues 142-172 (GPREEAAATVRKEDEGAAEAKPEPGRTRRDE). Acidic residues predominate over residues 173–182 (PEEEEDDEDD). One can recognise a Protein kinase domain in the interval 195-453 (LKFDIELGRG…IKDLLSHAFF (259 aa)). ATP-binding positions include S205, 275-278 (TELM), and K325. D342 serves as the catalytic Proton acceptor. Phosphoserine; by autocatalysis occurs at positions 352 and 356. A Phosphoserine modification is found at S560. 8 disordered regions span residues 579-630 (AQAG…DSQS), 699-751 (FPDP…PVVP), 917-1022 (PQMA…PGSQ), 1117-1185 (PVQE…ERAS), 1262-1297 (SEDT…SQAN), 1323-1345 (APEA…ASQG), 1374-1480 (SAQS…HEAP), and 1492-1586 (PCTP…DSTI). Residues 604–625 (PTSATSLASDSTFDSGQGSTVY) show a composition bias toward polar residues. Pro residues-rich tracts occupy residues 709-740 (VLPP…PTPL) and 939-1007 (PPQP…PLQP). The residue at position 1150 (S1150) is a Phosphoserine. Residues 1167–1178 (ARKHHRRSTRAR) are compositionally biased toward basic residues. The residue at position 1262 (S1262) is a Phosphoserine. Over residues 1392–1406 (SKEQPSFLASQQLLS) the composition is skewed to polar residues. Residues 1411 to 1426 (SNPPGAPPAPLAPSSP) show a composition bias toward pro residues. Polar residues-rich tracts occupy residues 1439–1453 (ATST…TASQ) and 1461–1473 (QGLT…SQPL). Residues 1510–1520 (EPLPPPAPEPS) are compositionally biased toward pro residues. A compositionally biased stretch (low complexity) spans 1526–1544 (PQPALGQPAPLLPAAVGAV). Positions 1552-1565 (PSPPLGPTVPPQPP) are enriched in pro residues. A Phosphoserine modification is found at S1588. Over residues 1621-1631 (TLEPLRGDQPR) the composition is skewed to basic and acidic residues. The segment at 1621–1865 (TLEPLRGDQP…PVQKQASLPV (245 aa)) is disordered. Positions 1675 to 1688 (QGTSSSMTAESSPR) are enriched in polar residues. A Phosphoserine modification is found at S1685. Positions 1721–1731 (ARVEPTDRDGG) are enriched in basic and acidic residues. Residues S1736, S1817, S1818, S1862, and S1889 each carry the phosphoserine modification. Disordered stretches follow at residues 1970 to 1990 (NVGF…SKSK) and 2011 to 2031 (TGHL…QASV). Residues 1981–1990 (GRRRKTSKSK) are compositionally biased toward basic residues. S2067 is subject to Phosphoserine. 2 disordered regions span residues 2123 to 2142 (SRSS…QPAL) and 2269 to 2297 (CCGH…PVRS). A compositionally biased stretch (polar residues) spans 2272–2289 (HSTQPRGGQRVGSKTASF).

The protein belongs to the protein kinase superfamily. Ser/Thr protein kinase family. WNK subfamily. As to quaternary structure, forms a complex with the phosphorylated form of STK39. It depends on Mg(2+) as a cofactor. Post-translationally, autophosphorylated. Autophosphorylation at Ser-352 and Ser-356 promotes its activity. Expressed in various cancer cell lines (at protein level). Predominantly expressed in heart, brain, skeletal muscle and colon.

Its subcellular location is the cytoplasm. It is found in the cell membrane. The enzyme catalyses L-seryl-[protein] + ATP = O-phospho-L-seryl-[protein] + ADP + H(+). It catalyses the reaction L-threonyl-[protein] + ATP = O-phospho-L-threonyl-[protein] + ADP + H(+). Activation requires autophosphorylation of Ser-356 and, to a lower extent, Ser-352. In terms of biological role, serine/threonine-protein kinase component of the WNK2-SPAK/OSR1 kinase cascade, which plays an important role in the regulation of electrolyte homeostasis, cell signaling, survival, and proliferation. The WNK2-SPAK/OSR1 kinase cascade is composed of WNK2, which mediates phosphorylation and activation of downstream kinases OXSR1/OSR1 and STK39/SPAK. Following activation, OXSR1/OSR1 and STK39/SPAK catalyze phosphorylation of ion cotransporters, regulating their activity. Acts as an activator and inhibitor of sodium-coupled chloride cotransporters and potassium-coupled chloride cotransporters respectively. Activates SLC12A2, SCNN1A, SCNN1B, SCNN1D and SGK1 and inhibits SLC12A5. Negatively regulates the EGF-induced activation of the ERK/MAPK-pathway and the downstream cell cycle progression. Affects MAPK3/MAPK1 activity by modulating the activity of MAP2K1 and this modulation depends on phosphorylation of MAP2K1 by PAK1. WNK2 acts by interfering with the activity of PAK1 by controlling the balance of the activity of upstream regulators of PAK1 activity, RHOA and RAC1, which display reciprocal activity. In Homo sapiens (Human), this protein is Serine/threonine-protein kinase WNK2.